Consider the following 273-residue polypeptide: Glutamate racemase (273 aa).

Residues 17 to 18 (DS) and 49 to 50 (YG) each bind substrate. Cys-80 functions as the Proton donor/acceptor in the catalytic mechanism. Residue 81 to 82 (NT) participates in substrate binding. Cys-190 acts as the Proton donor/acceptor in catalysis. 191 to 192 (TH) contacts substrate.

Belongs to the aspartate/glutamate racemases family.

The catalysed reaction is L-glutamate = D-glutamate. It participates in cell wall biogenesis; peptidoglycan biosynthesis. Provides the (R)-glutamate required for cell wall biosynthesis. This chain is Glutamate racemase, found in Corynebacterium glutamicum (strain ATCC 13032 / DSM 20300 / JCM 1318 / BCRC 11384 / CCUG 27702 / LMG 3730 / NBRC 12168 / NCIMB 10025 / NRRL B-2784 / 534).